Here is a 542-residue protein sequence, read N- to C-terminus: Aminotriazole resistance protein (542 aa).

Residues 1-108 (MGNQSLVVLT…SFGSEGNSKS (108 aa)) lie on the Cytoplasmic side of the membrane. The chain crosses the membrane as a helical span at residues 109–129 (WLMASFPLVSGSFILISGRLG). At 130–136 (DIYGLKK) the chain is on the extracellular side. A helical membrane pass occupies residues 137 to 157 (MLLVGYVLVIIWSLICGITKY). The Cytoplasmic segment spans residues 158–172 (SGSDTFFIISRAFQG). A helical transmembrane segment spans residues 173–193 (LGIAFVLPNVLGIIGNIYVGG). Topologically, residues 194–198 (TFRKN) are extracellular. A helical membrane pass occupies residues 199–219 (IVISFVGAMAPIGATLGCLFA). Residues 220–231 (GLIGTEDPKQWP) lie on the Cytoplasmic side of the membrane. Residues 232–252 (WAFYAYSIAAFINFVLSIYAI) form a helical membrane-spanning segment. Residues 253–262 (PSTIPTNIHH) are Extracellular-facing. A helical membrane pass occupies residues 263-283 (FSMDWIGSVLGVIGLILLNFV). Residues 284-295 (WNQAPISGWNQA) are Cytoplasmic-facing. A helical transmembrane segment spans residues 296 to 316 (YIIVILIISVIFLVVFIIYEI). The Extracellular segment spans residues 317 to 333 (RFAKTPLLPRAVIKDRH). A helical membrane pass occupies residues 334-354 (MIQIMLALFFGWGSFGIFTFY). Over 355-371 (YFQFQLNIRQYTALWAG) the chain is Cytoplasmic. The chain crosses the membrane as a helical span at residues 372–392 (GTYFMFLIWGIIAALLVGFTI). Residues 393 to 399 (KNVSPSV) are Extracellular-facing. The chain crosses the membrane as a helical span at residues 400 to 420 (FLFFSMVAFNVGSIMASVTPV). The Cytoplasmic segment spans residues 421 to 429 (HETYFRTQL). The helical transmembrane segment at 430–450 (GTMIILSFGMDLSFPASSIIF) threads the bilayer. Over 451–505 (SDNLPMEYQGMAGSLVNTVVNYSMSLCLGMGATVETQVNSDGKHLLKGYRGAQYL) the chain is Extracellular. The N-linked (GlcNAc...) asparagine glycan is linked to asparagine 471. A helical membrane pass occupies residues 506 to 526 (GIGLASLACMISGLYMVESFI). Over 527 to 542 (KGRRARAAAEYDCTVA) the chain is Cytoplasmic.

Belongs to the major facilitator superfamily.

It localises to the membrane. Functionally, putative component of the machinery responsible for pumping aminotriazole (and possibly other toxic compounds) out of the cell. Probable ATP-dependent export permease. Appears to confer resistance only to aminotriazole. The polypeptide is Aminotriazole resistance protein (ATR1) (Saccharomyces cerevisiae (strain ATCC 204508 / S288c) (Baker's yeast)).